Reading from the N-terminus, the 639-residue chain is 3D-(3,5/4)-trihydroxycyclohexane-1,2-dione hydrolase (639 aa).

A thiamine diphosphate-binding site is contributed by E65. Positions 437 to 517 (SLPGDLQRMW…INIILFDNSG (81 aa)) are thiamine pyrophosphate binding. Residues D488 and N515 each coordinate Mg(2+).

This sequence belongs to the TPP enzyme family. Mg(2+) is required as a cofactor. The cofactor is thiamine diphosphate.

It carries out the reaction 3D-3,5/4-trihydroxycyclohexane-1,2-dione + H2O = 5-deoxy-D-glucuronate + H(+). The protein operates within polyol metabolism; myo-inositol degradation into acetyl-CoA; acetyl-CoA from myo-inositol: step 3/7. In terms of biological role, involved in the cleavage of the C1-C2 bond of 3D-(3,5/4)-trihydroxycyclohexane-1,2-dione (THcHDO) to yield 5-deoxy-glucuronate (5DG). The polypeptide is 3D-(3,5/4)-trihydroxycyclohexane-1,2-dione hydrolase (Geobacillus thermodenitrificans (strain NG80-2)).